We begin with the raw amino-acid sequence, 277 residues long: Orotidine 5'-phosphate decarboxylase (277 aa).

Substrate is bound by residues D40, 62–64 (KTH), 93–102 (DRKFIDIGNT), Y229, and R247. Catalysis depends on K95, which acts as the Proton donor.

The protein belongs to the OMP decarboxylase family.

The enzyme catalyses orotidine 5'-phosphate + H(+) = UMP + CO2. Its pathway is pyrimidine metabolism; UMP biosynthesis via de novo pathway; UMP from orotate: step 2/2. This chain is Orotidine 5'-phosphate decarboxylase (pyrG), found in Aspergillus awamori (Black koji mold).